Consider the following 280-residue polypeptide: Pre-mRNA-splicing factor PRP21 (280 aa).

The stretch at 11–49 is one SURP motif 1 repeat; the sequence is DIKTTVNYIKQHGVEFENKLLEDERFSFIKKDDPLHEYY. The disordered stretch occupies residues 53–72; it reads MNEPTDTVSGEDNDRKSERE. Residues 95–135 form an SURP motif 2 repeat; it reads VIKLTARYYAKDKSIVEQMISKDGEARLNFMNSSHPLHKTF. Composition is skewed to basic and acidic residues over residues 246–261 and 269–280; these read EKIV…GDSK and AVGETRLKKSKK. Positions 246-280 are disordered; that stretch reads EKIVSDQGKQKGGDSKGKKRKIRAVGETRLKKSKK.

Belongs to the CWC complex (or CEF1-associated complex), a spliceosome sub-complex reminiscent of a late-stage spliceosome composed of the U2, U5 and U6 snRNAs and at least BUD13, BUD31, BRR2, CDC40, CEF1, CLF1, CUS1, CWC2, CWC15, CWC21, CWC22, CWC23, CWC24, CWC25, CWC27, ECM2, HSH155, IST3, ISY1, LEA1, MSL1, NTC20, PRP8, PRP9, PRP11, PRP19, PRP21, PRP22, PRP45, PRP46, SLU7, SMB1, SMD1, SMD2, SMD3, SMX2, SMX3, SNT309, SNU114, SPP2, SYF1, SYF2, RSE1 and YJU2.

Its subcellular location is the nucleus. Functionally, mRNA splicing factors, PRP9, PRP11, and PRP21, are necessary for binding of the U2 snRNP to the pre-mRNA in an early step of spliceosome assembly. This chain is Pre-mRNA-splicing factor PRP21 (PRP21), found in Saccharomyces cerevisiae (strain ATCC 204508 / S288c) (Baker's yeast).